A 271-amino-acid polypeptide reads, in one-letter code: Phosphate import ATP-binding protein PstB (271 aa).

The region spanning 24–266 is the ABC transporter domain; sequence MIGKDVSVYY…PDDQRTQDYI (243 aa). Position 56 to 63 (56 to 63) interacts with ATP; sequence GPSGCGKS.

It belongs to the ABC transporter superfamily. Phosphate importer (TC 3.A.1.7) family. The complex is composed of two ATP-binding proteins (PstB), two transmembrane proteins (PstC and PstA) and a solute-binding protein (PstS).

It localises to the cell inner membrane. It catalyses the reaction phosphate(out) + ATP + H2O = ADP + 2 phosphate(in) + H(+). In terms of biological role, part of the ABC transporter complex PstSACB involved in phosphate import. Responsible for energy coupling to the transport system. This is Phosphate import ATP-binding protein PstB from Agrobacterium fabrum (strain C58 / ATCC 33970) (Agrobacterium tumefaciens (strain C58)).